A 1096-amino-acid polypeptide reads, in one-letter code: Inactive phospholipase C-like protein 1 (1096 aa).

Positions 1–101 (MAEGAASREA…KKTVSFSSMP (101 aa)) are disordered. Over residues 26–41 (GADAASGDAAPEASGG) the composition is skewed to low complexity. Serine 48 and serine 78 each carry phosphoserine. Residues 83–222 (PSNQKCGGRK…NIWVSGLRYL (140 aa)) form an interaction with PPP1C region. At threonine 94 the chain carries Phosphothreonine. Serine 96 is subject to Phosphoserine. The region spanning 114–224 (SFMQAGCELK…WVSGLRYLVS (111 aa)) is the PH domain. In terms of domain architecture, PI-PLC X-box spans 399–543 (QDMTQPLSHY…LKHMIIVKGK (145 aa)). The interaction with GABA A beta subunit stretch occupies residues 544 to 568 (KLPSESDLLEGEVTDEDEEAEMSRR). Residue threonine 557 is modified to Phosphothreonine. Residue serine 570 is modified to Phosphoserine. Positions 586–702 (LSDLVSICKS…GYVLRPSIMR (117 aa)) constitute a PI-PLC Y-box domain. The 130-residue stretch at 702–831 (RDEVSYFSAN…PGYRHVPLRS (130 aa)) folds into the C2 domain. Residues 1040-1060 (DLLKNAKNEAVENIKQIQLAC) adopt a coiled-coil conformation. A disordered region spans residues 1067-1096 (KGPGSAAEAKGKRSLEAIEEKESSEENGKL). Over residues 1075-1096 (AKGKRSLEAIEEKESSEENGKL) the composition is skewed to basic and acidic residues. Position 1080 is a phosphoserine (serine 1080).

The protein belongs to the PRIP family. As to quaternary structure, interacts with PPP2CA, GABA receptor beta subunits, GABA receptor gamma-2 subunits. Interacts with Ins(1,4,5)P3, Ins(1,4,5,6)P4, GABARAP, and PPP1C. May form a ternary complex with GABA receptor beta subunit and GABARAP. The formation of a ternary complex with GABA receptor beta subunit and GABARAP could be the key step for facilitating the association of GABARAP with the GABA receptor gamma-2 subunit and to allow it to be transported at the right destination. In terms of processing, phosphorylation of Thr-94 resulted in dissociation of PPP1C from PRIP1. In vitro, phosphorylated by the catalytic subunit of PKA. Expressed in brain. Found in the granular cell and Purkinje cell layers in the cerebellum; and in the hippocampal pyramidal cells, dentate granule cells and pyramidal granule cells of the cerebral cortex in the cerebrum.

The protein localises to the cytoplasm. Functionally, involved in an inositol phospholipid-based intracellular signaling cascade. Shows no PLC activity to phosphatidylinositol 4,5-bisphosphate and phosphatidylinositol. Component in the phospho-dependent endocytosis process of GABA A receptor. Acts as an inhibitor of PPP1C. This is Inactive phospholipase C-like protein 1 (Plcl1) from Rattus norvegicus (Rat).